Here is a 244-residue protein sequence, read N- to C-terminus: tRNA uridine(34) hydroxylase (244 aa).

Residues 129–219 form the Rhodanese domain; that stretch reads QGRELVMLDT…GILKYFEETD (91 aa). The active-site Cysteine persulfide intermediate is Cys-183.

The protein belongs to the TrhO family.

The catalysed reaction is uridine(34) in tRNA + AH2 + O2 = 5-hydroxyuridine(34) in tRNA + A + H2O. In terms of biological role, catalyzes oxygen-dependent 5-hydroxyuridine (ho5U) modification at position 34 in tRNAs. In Bordetella bronchiseptica (strain ATCC BAA-588 / NCTC 13252 / RB50) (Alcaligenes bronchisepticus), this protein is tRNA uridine(34) hydroxylase.